Here is a 234-residue protein sequence, read N- to C-terminus: MSELYSTPQPFYYDKKSGFTQDEFKHAIDKSSTIYVGYLSFYTTEEQLYELFSKCGEIKRIIMGLDRNQKTPCGFCFVEYYSKEDAADCIKYINGSKLDERLIRCDWDYGFKEGRQYGRGLSGGQVRDEYRTDYDPGRGGYGKQRQFEMDQFSDVNGGDITYQQQILQLQQSQQQHQLYQQANAGGPQNYSGKRNRGADDDSDSFKRQRDNNGSISAGNTPNKGRFRERDEEDD.

MRNA is bound by residues Y12, Y35, 104–108, 115–119, and 125–126; these read RCDWD, RQYGR, and QV. In terms of domain architecture, RRM spans 32-110; sequence STIYVGYLSF…RLIRCDWDYG (79 aa). Disordered stretches follow at residues 122–144 and 177–234; these read SGGQ…YGKQ and QLYQ…EEDD. The span at 126 to 136 shows a compositional bias: basic and acidic residues; the sequence is VRDEYRTDYDP. Residues 182 to 192 are compositionally biased toward polar residues; sequence ANAGGPQNYSG. A compositionally biased stretch (basic and acidic residues) spans 196–210; that stretch reads RGADDDSDSFKRQRD. Residues 211 to 222 show a composition bias toward polar residues; it reads NNGSISAGNTPN. A compositionally biased stretch (basic and acidic residues) spans 225-234; the sequence is RFRERDEEDD.

Belongs to the RRM NCBP2 family. Component of the nuclear cap-binding complex (CBC), a heterodimer composed of ncbp1 and ncbp2 that interacts with m7GpppG-capped RNA.

Its subcellular location is the nucleus. Functionally, component of the cap-binding complex (CBC), which binds co-transcriptionally to the 5' cap of pre-mRNAs and is involved in various processes such as pre-mRNA splicing and RNA-mediated gene silencing (RNAi). The CBC complex is involved in miRNA-mediated RNA interference and is required for primary microRNAs (miRNAs) processing. In the CBC complex, ncbp2 recognizes and binds capped RNAs (m7GpppG-capped RNA) but requires ncbp1 to stabilize the movement of its N-terminal loop and lock the CBC into a high affinity cap-binding state with the cap structure. The polypeptide is Nuclear cap-binding protein subunit 2 (ncbp2) (Dictyostelium discoideum (Social amoeba)).